The chain runs to 401 residues: Probable inactive purple acid phosphatase 14 (401 aa).

The N-terminal stretch at 1-30 is a signal peptide; sequence MEETRRRFVISSVLSVSLIYLCLSTCHVSA. N-linked (GlcNAc...) asparagine glycosylation occurs at asparagine 79. Asparagine 197 is a substrate binding site. Position 197 (asparagine 197) interacts with Zn(2+). An N-linked (GlcNAc...) asparagine glycan is attached at asparagine 246. Histidine 256 serves as a coordination point for Zn(2+). N-linked (GlcNAc...) asparagine glycosylation occurs at asparagine 266. Histidine 305 is a binding site for Zn(2+). A substrate-binding site is contributed by 305-307; sequence HDH. Residue histidine 307 coordinates Fe cation. Asparagine 371 and asparagine 384 each carry an N-linked (GlcNAc...) asparagine glycan.

It belongs to the metallophosphoesterase superfamily. Purple acid phosphatase family. Homodimer. Fe cation is required as a cofactor. Zn(2+) serves as cofactor. In terms of tissue distribution, specifically expressed in flowers.

The protein localises to the secreted. This chain is Probable inactive purple acid phosphatase 14 (PAP14), found in Arabidopsis thaliana (Mouse-ear cress).